The following is a 415-amino-acid chain: Gamma-glutamyl phosphate reductase (415 aa).

Belongs to the gamma-glutamyl phosphate reductase family.

Its subcellular location is the cytoplasm. It catalyses the reaction L-glutamate 5-semialdehyde + phosphate + NADP(+) = L-glutamyl 5-phosphate + NADPH + H(+). The protein operates within amino-acid biosynthesis; L-proline biosynthesis; L-glutamate 5-semialdehyde from L-glutamate: step 2/2. Its function is as follows. Catalyzes the NADPH-dependent reduction of L-glutamate 5-phosphate into L-glutamate 5-semialdehyde and phosphate. The product spontaneously undergoes cyclization to form 1-pyrroline-5-carboxylate. In Thermotoga sp. (strain RQ2), this protein is Gamma-glutamyl phosphate reductase.